An 838-amino-acid chain; its full sequence is MPLSYQHFRKLLLLDDETEAGPLEEELPRLADEDLNRRVAEDLNLGNLNVSIPWTHKVGNFTGLYSSTVPIFNPEWQTPSFPKIHLHEDIINRCQQFVGPLTVNEKRRLKLIMPARFYPNSTKYLPLDKGIKPYYPDQVVNHYFQTRHYLHTLWKAGILYKRETTRSASFCGSPYSWEQELQHSQRHGDESFCSQPSGILSRSSVGPCIRSQFNKSRLGLQPHQGPLATSQPGRSGSIRPRALPSTRRCFGVEPSGSGHIDYSANSSSHCLHQSAVRKAAYSHLSTSKRQSSSGHAVEFHSFAPSSARSQSQGPVFSCWWLQFRNTQPCSQYCLSHLVNLLEDWGPCVEHGEHHIRIPRTPARVTGGVFLVDKNPHNTAESRLVVDFSQFSRGLTRVSWPKFAVPNLQSLTNLLSSNLSWLSLDVSAAFYHIPLHPAAMPHLLIGSSGLSRYVARLSSNSRIHNNQYGTLQNLHDSCSRQLYVSLMLLYKTYGWKLHLYSHPIILGFRKIPMGVGLSPFLLAQFTSAICSVVRRAFPHCLAFSYMDDVVLGAKSVQHRESLYTAVTNFLLSLGIHLNPNKTKRWGYSLNFMGYVIGSWGTLPQDHIIQKIKHCFRKLPVNRPIDWKVCQRIVGLLGFAAPFTQCGYPALMPLYACIQAKQAFTFSPTYKAFLNQQYLNLYPVARQRSGLCQVFADATPTGWGLAIGHQRMRGTFVAPLPIHTAELLAACFARSRSGAKLIGTDNSVVLSRKYTSFPWLLGCTANWILRGTSFVYVPSALNPADDPSRGRLGLYRPLLRLPYRPTTGRTSLYAVSPSVPSHLPVRVHFASPLHVAWRPP.

Positions 1–179 (MPLSYQHFRK…FCGSPYSWEQ (179 aa)) are terminal protein domain (TP). The tract at residues 180-341 (ELQHSQRHGD…YCLSHLVNLL (162 aa)) is spacer. The tract at residues 218-242 (LGLQPHQGPLATSQPGRSGSIRPRA) is disordered. Residues 342–685 (EDWGPCVEHG…YLNLYPVARQ (344 aa)) form a polymerase/reverse transcriptase domain (RT) region. One can recognise a Reverse transcriptase domain in the interval 352–595 (EHHIRIPRTP…YSLNFMGYVI (244 aa)). 3 residues coordinate Mg(2+): D424, D546, and D547.

The protein belongs to the hepadnaviridae P protein family.

It catalyses the reaction DNA(n) + a 2'-deoxyribonucleoside 5'-triphosphate = DNA(n+1) + diphosphate. The enzyme catalyses Endonucleolytic cleavage to 5'-phosphomonoester.. Its activity is regulated as follows. Activated by host HSP70 and HSP40 in vitro to be able to bind the epsilon loop of the pgRNA. Because deletion of the RNase H region renders the protein partly chaperone-independent, the chaperones may be needed indirectly to relieve occlusion of the RNA-binding site by this domain. Inhibited by several reverse-transcriptase inhibitors: Lamivudine, Adefovir and Entecavir. Functionally, multifunctional enzyme that converts the viral RNA genome into dsDNA in viral cytoplasmic capsids. This enzyme displays a DNA polymerase activity that can copy either DNA or RNA templates, and a ribonuclease H (RNase H) activity that cleaves the RNA strand of RNA-DNA heteroduplexes in a partially processive 3'- to 5'-endonucleasic mode. Neo-synthesized pregenomic RNA (pgRNA) are encapsidated together with the P protein, and reverse-transcribed inside the nucleocapsid. Initiation of reverse-transcription occurs first by binding the epsilon loop on the pgRNA genome, and is initiated by protein priming, thereby the 5'-end of (-)DNA is covalently linked to P protein. Partial (+)DNA is synthesized from the (-)DNA template and generates the relaxed circular DNA (RC-DNA) genome. After budding and infection, the RC-DNA migrates in the nucleus, and is converted into a plasmid-like covalently closed circular DNA (cccDNA). The activity of P protein does not seem to be necessary for cccDNA generation, and is presumably released from (+)DNA by host nuclear DNA repair machinery. This chain is Protein P, found in Homo sapiens (Human).